The primary structure comprises 463 residues: Glutamate--tRNA ligase 1 (463 aa).

A 'HIGH' region motif is present at residues 10–20; it reads PSPTGYLHIGG. The 'KMSKS' region motif lies at 238-242; the sequence is KLSKR. K241 serves as a coordination point for ATP.

This sequence belongs to the class-I aminoacyl-tRNA synthetase family. Glutamate--tRNA ligase type 1 subfamily. Monomer.

Its subcellular location is the cytoplasm. The enzyme catalyses tRNA(Glu) + L-glutamate + ATP = L-glutamyl-tRNA(Glu) + AMP + diphosphate. Catalyzes the attachment of glutamate to tRNA(Glu) in a two-step reaction: glutamate is first activated by ATP to form Glu-AMP and then transferred to the acceptor end of tRNA(Glu). The chain is Glutamate--tRNA ligase 1 from Helicobacter pylori (strain HPAG1).